The following is a 160-amino-acid chain: Cytochrome b6-f complex subunit 4 (160 aa).

A run of 3 helical transmembrane segments spans residues 36–56, 95–115, and 131–151; these read LLYI…GLAI, LLGV…PFLE, and TVFL…TLPI.

This sequence belongs to the cytochrome b family. PetD subfamily. In terms of assembly, the 4 large subunits of the cytochrome b6-f complex are cytochrome b6, subunit IV (17 kDa polypeptide, petD), cytochrome f and the Rieske protein, while the 4 small subunits are petG, petL, petM and petN. The complex functions as a dimer.

It localises to the plastid. Its subcellular location is the chloroplast thylakoid membrane. In terms of biological role, component of the cytochrome b6-f complex, which mediates electron transfer between photosystem II (PSII) and photosystem I (PSI), cyclic electron flow around PSI, and state transitions. This chain is Cytochrome b6-f complex subunit 4, found in Acorus calamus (Sweet flag).